The chain runs to 323 residues: tRNA U34 carboxymethyltransferase (323 aa).

Carboxy-S-adenosyl-L-methionine-binding positions include Lys-91, Trp-105, Lys-110, Gly-130, 152–154 (DPT), 181–182 (IE), Met-196, Tyr-200, and Arg-315.

This sequence belongs to the class I-like SAM-binding methyltransferase superfamily. CmoB family. As to quaternary structure, homotetramer.

The enzyme catalyses carboxy-S-adenosyl-L-methionine + 5-hydroxyuridine(34) in tRNA = 5-carboxymethoxyuridine(34) in tRNA + S-adenosyl-L-homocysteine + H(+). In terms of biological role, catalyzes carboxymethyl transfer from carboxy-S-adenosyl-L-methionine (Cx-SAM) to 5-hydroxyuridine (ho5U) to form 5-carboxymethoxyuridine (cmo5U) at position 34 in tRNAs. This chain is tRNA U34 carboxymethyltransferase, found in Salmonella typhimurium (strain LT2 / SGSC1412 / ATCC 700720).